Consider the following 212-residue polypeptide: MYRLSSSMLPRALAQAMRTGHLNGQSLHSSAVAATYKYVNKKEQESEVDMKSATDNAARILMWTELIRGLGMTLSYLFREPATINYPFEKGPLSPRFRGEHALRRYPSGEERCIACKLCEAICPAQAITIEAEPRADGSRRTTRYDIDMTKCIYCGFCQEACPVDAIVEGPNFEFSTETHEELLYNKEKLLNNGDKWEAEIAANIQADYLYR.

Residues 1 to 34 (MYRLSSSMLPRALAQAMRTGHLNGQSLHSSAVAA) constitute a mitochondrion transit peptide. 2 4Fe-4S ferredoxin-type domains span residues 104-133 (RRYP…IEAE) and 143-172 (TRYD…EGPN). Residues Cys113, Cys116, Cys119, Cys123, Cys152, Cys155, Cys158, and Cys162 each contribute to the [4Fe-4S] cluster site.

It belongs to the complex I 23 kDa subunit family. In terms of assembly, complex I is composed of 45 different subunits. This is a component of the iron-sulfur (IP) fragment of the enzyme. Interacts with RAB5IF. Requires [4Fe-4S] cluster as cofactor.

It localises to the mitochondrion inner membrane. The enzyme catalyses a ubiquinone + NADH + 5 H(+)(in) = a ubiquinol + NAD(+) + 4 H(+)(out). Core subunit of the mitochondrial membrane respiratory chain NADH dehydrogenase (Complex I) which catalyzes electron transfer from NADH through the respiratory chain, using ubiquinone as an electron acceptor. Essential for the catalytic activity and assembly of complex I. The protein is NADH dehydrogenase [ubiquinone] iron-sulfur protein 8, mitochondrial (Ndufs8) of Mus musculus (Mouse).